The primary structure comprises 385 residues: Taurine hydroxylase-like protein SAT17 (385 aa).

It functions in the pathway mycotoxin biosynthesis. In terms of biological role, taurine hydroxylase-like protein; part of the satratoxin SC3 cluster involved in the biosynthesis of satratoxins, trichothecene mycotoxins that are associated with human food poisonings. Satratoxins are suggested to be made by products of multiple gene clusters (SC1, SC2 and SC3) that encode 21 proteins in all, including polyketide synthases, acetyltransferases, and other enzymes expected to modify the trichothecene skeleton. SC1 encodes 10 proteins, SAT1 to SAT10. The largest are SAT8, which encodes a putative polyketide synthase (PKS) with a conventional non-reducing architecture, and SAT10, a putative protein containing four ankyrin repeats and thus may be involved in protein scaffolding. The putative short-chain reductase SAT3 may assist the PKS in some capacity. SAT6 contains a secretory lipase domain and acts probably as a trichothecene esterase. SAT5 encodes a putative acetyltransferase, and so, with SAT6, may affect endogenous protection from toxicity. The probable transcription factor SAT9 may regulate the expression of the SC1 cluster. SC2 encodes proteins SAT11 to SAT16, the largest of which encodes the putative reducing PKS SAT13. SAT11 is a cytochrome P450 monooxygenase, while SAT14 and SAT16 are probable acetyltransferases. The SC2 cluster may be regulated by the transcription factor SAT15. SC3 is a small cluster that encodes 5 proteins, SAT17 to SAT21. SAT21 is a putative MFS-type transporter which may have a role in exporting secondary metabolites. The four other proteins putatively encoded in SC3 include the taurine hydroxylase-like protein SAT17, the O-methyltransferase SAT18, the acetyltransferase SAT19, and the Cys6-type zinc finger SAT20, the latter being probably involved in regulation of SC3 expression. This chain is Taurine hydroxylase-like protein SAT17, found in Stachybotrys chartarum (strain CBS 109288 / IBT 7711) (Toxic black mold).